The primary structure comprises 264 residues: 3-methyl-2-oxobutanoate hydroxymethyltransferase (264 aa).

Mg(2+) is bound by residues Asp-45 and Asp-84. Residues 45-46 (DS), Asp-84, and Lys-112 each bind 3-methyl-2-oxobutanoate. Mg(2+) is bound at residue Glu-114. The active-site Proton acceptor is Glu-181.

It belongs to the PanB family. In terms of assembly, homodecamer; pentamer of dimers. Mg(2+) is required as a cofactor.

Its subcellular location is the cytoplasm. It carries out the reaction 3-methyl-2-oxobutanoate + (6R)-5,10-methylene-5,6,7,8-tetrahydrofolate + H2O = 2-dehydropantoate + (6S)-5,6,7,8-tetrahydrofolate. Its pathway is cofactor biosynthesis; (R)-pantothenate biosynthesis; (R)-pantoate from 3-methyl-2-oxobutanoate: step 1/2. In terms of biological role, catalyzes the reversible reaction in which hydroxymethyl group from 5,10-methylenetetrahydrofolate is transferred onto alpha-ketoisovalerate to form ketopantoate. This chain is 3-methyl-2-oxobutanoate hydroxymethyltransferase, found in Escherichia coli O17:K52:H18 (strain UMN026 / ExPEC).